Consider the following 982-residue polypeptide: Chromosome partition protein Smc (982 aa).

33–40 serves as a coordination point for ATP; that stretch reads PNGSGKSN. Coiled-coil stretches lie at residues 171–231, 280–310, and 337–377; these read RYTK…ELAV, SADM…VIID, and QTQL…QIEK. The 120-residue stretch at 416 to 535 folds into the SMC hinge domain; it reads TGILNTLGTF…AKDLNSAINL (120 aa). Coiled-coil stretches lie at residues 575-718 and 753-822; these read SASL…SARE and VKLS…IASN.

It belongs to the SMC family. As to quaternary structure, homodimer.

It is found in the cytoplasm. Functionally, required for chromosome condensation and partitioning. The protein is Chromosome partition protein Smc of Mycoplasma genitalium (strain ATCC 33530 / DSM 19775 / NCTC 10195 / G37) (Mycoplasmoides genitalium).